The primary structure comprises 78 residues: Apolipoprotein C-I (78 aa).

The signal sequence occupies residues 1 to 26 (MRLILWLPVLVVVLLMVTEGPAPAQG).

The protein belongs to the apolipoprotein C1 family.

The protein resides in the secreted. In terms of biological role, inhibitor of lipoprotein binding to the low density lipoprotein (LDL) receptor, LDL receptor-related protein, and very low density lipoprotein (VLDL) receptor. Associates with high density lipoproteins (HDL) and the triacylglycerol-rich lipoproteins in the plasma and makes up about 10% of the protein of the VLDL and 2% of that of HDL. Appears to interfere directly with fatty acid uptake and is also the major plasma inhibitor of cholesteryl ester transfer protein (CETP). Binds free fatty acids and reduces their intracellular esterification. Modulates the interaction of APOE with beta-migrating VLDL and inhibits binding of beta-VLDL to the LDL receptor-related protein. This is Apolipoprotein C-I (APOC1) from Panthera tigris altaica (Siberian tiger).